Reading from the N-terminus, the 171-residue chain is Thioredoxin-2 (171 aa).

The region spanning 41–169 (AFNASPSTSQ…LQALISANHP (129 aa)) is the Thioredoxin domain. Cysteines 95 and 98 form a disulfide.

It belongs to the thioredoxin family.

The protein localises to the cytoplasm. Its subcellular location is the vacuole. Functionally, thioredoxin involved in responses to oxidative and cell wall stresses. Plays an important role in appressorium formation on hyphal tips. TRX2 may affect invasive growth via the MST11-MST7-PMK1 pathway since it is required for the proper folding or dimerization of MAPKK MST7. This Pyricularia oryzae (strain 70-15 / ATCC MYA-4617 / FGSC 8958) (Rice blast fungus) protein is Thioredoxin-2.